The chain runs to 256 residues: Thioredoxin-dependent peroxide reductase, mitochondrial (256 aa).

The transit peptide at 1–61 (MAAAVGRLLR…KLFSTSSSCH (61 aa)) directs the protein to the mitochondrion. The Thioredoxin domain occupies 63 to 221 (PAVTQHAPYF…TLRLVKAFQY (159 aa)). Position 83 is an N6-succinyllysine (lysine 83). The residue at position 91 (lysine 91) is an N6-acetyllysine; alternate. Lysine 91 bears the N6-succinyllysine; alternate mark. Cysteine 108 (cysteine sulfenic acid (-SOH) intermediate) is an active-site residue. Residue threonine 146 is modified to Phosphothreonine.

The protein belongs to the peroxiredoxin family. AhpC/Prx1 subfamily. In terms of assembly, homodimer; disulfide-linked, upon oxidation. 6 homodimers assemble to form a ring-like dodecamer. Interacts with NEK6. Interacts with LRRK2. Interacts with MAP3K13. Interacts with RPS6KC1 (via PX domain). Post-translationally, phosphorylated by LRRK2; phosphorylation reduces perodixase activity. In terms of processing, the enzyme can be inactivated by further oxidation of the cysteine sulfenic acid (C(P)-SOH) to sulphinic acid (C(P)-SO2H) and sulphonic acid (C(P)-SO3H) instead of its condensation to a disulfide bond. S-palmitoylated.

The protein resides in the mitochondrion. Its subcellular location is the cytoplasm. It is found in the early endosome. The enzyme catalyses a hydroperoxide + [thioredoxin]-dithiol = an alcohol + [thioredoxin]-disulfide + H2O. Thiol-specific peroxidase that catalyzes the reduction of hydrogen peroxide and organic hydroperoxides to water and alcohols, respectively. Plays a role in cell protection against oxidative stress by detoxifying peroxides. Acts synergistically with MAP3K13 to regulate the activation of NF-kappa-B in the cytosol. Required for the maintenance of physical strength. This Homo sapiens (Human) protein is Thioredoxin-dependent peroxide reductase, mitochondrial (PRDX3).